Here is a 220-residue protein sequence, read N- to C-terminus: Glutathione S-transferase U23 (220 aa).

The 80-residue stretch at 3-82 (EEIILLDYWA…YIDELWPDTN (80 aa)) folds into the GST N-terminal domain. Glutathione is bound by residues 13–14 (SM), 39–40 (NK), 53–54 (KI), and 66–67 (ES). Residues 88–208 (DPYQRAQARF…LPDSDKVLKS (121 aa)) form the GST C-terminal domain.

This sequence belongs to the GST superfamily. Tau family.

It is found in the cytoplasm. Its subcellular location is the cytosol. It carries out the reaction RX + glutathione = an S-substituted glutathione + a halide anion + H(+). Its function is as follows. May be involved in the conjugation of reduced glutathione to a wide number of exogenous and endogenous hydrophobic electrophiles and have a detoxification role against certain herbicides. This Arabidopsis thaliana (Mouse-ear cress) protein is Glutathione S-transferase U23 (GSTU23).